The primary structure comprises 667 residues: Putative L-type lectin-domain containing receptor kinase I.4 (667 aa).

Residues 1 to 21 (MDCRLHLVLFFSCVCLICLSG) form the signal peptide. At 22–294 (QQETGFVYNG…PREEKKKLHP (273 aa)) the chain is on the extracellular side. Residues 24–257 (ETGFVYNGFH…NQYILGWSFS (234 aa)) form a legume-lectin like region. N-linked (GlcNAc...) asparagine glycosylation is found at Asn-55, Asn-110, Asn-124, Asn-128, Asn-181, Asn-204, and Asn-225. A helical membrane pass occupies residues 295 to 315 (LLIGLVILLVIPVLMVLGGVY). Topologically, residues 316-667 (WYRRKKYAEV…THSILEGYGR (352 aa)) are cytoplasmic. The Protein kinase domain maps to 350-625 (FVKDALVGKG…QYLSQKQPLP (276 aa)). Residues 356–364 (VGKGGFGKV) and Lys-378 each bind ATP. The Proton acceptor role is filled by Asp-474.

The protein in the C-terminal section; belongs to the protein kinase superfamily. Ser/Thr protein kinase family. In the N-terminal section; belongs to the leguminous lectin family.

The protein resides in the cell membrane. The enzyme catalyses L-seryl-[protein] + ATP = O-phospho-L-seryl-[protein] + ADP + H(+). It carries out the reaction L-threonyl-[protein] + ATP = O-phospho-L-threonyl-[protein] + ADP + H(+). The protein is Putative L-type lectin-domain containing receptor kinase I.4 (LECRK14) of Arabidopsis thaliana (Mouse-ear cress).